The sequence spans 226 residues: Ribonuclease 3 (226 aa).

The RNase III domain occupies 6-128; sequence TNRLQKKLGY…LIGGVFLDSD (123 aa). Glu41 is a binding site for Mg(2+). The active site involves Asp45. The Mg(2+) site is built by Asp114 and Glu117. The active site involves Glu117. Residues 155 to 225 form the DRBM domain; that stretch reads DPKTRLQEYL…AEQALKLLEL (71 aa).

It belongs to the ribonuclease III family. As to quaternary structure, homodimer. Mg(2+) serves as cofactor.

The protein resides in the cytoplasm. It carries out the reaction Endonucleolytic cleavage to 5'-phosphomonoester.. Functionally, digests double-stranded RNA. Involved in the processing of primary rRNA transcript to yield the immediate precursors to the large and small rRNAs (23S and 16S). Processes some mRNAs, and tRNAs when they are encoded in the rRNA operon. Processes pre-crRNA and tracrRNA of type II CRISPR loci if present in the organism. The polypeptide is Ribonuclease 3 (Sodalis glossinidius (strain morsitans)).